A 54-amino-acid polypeptide reads, in one-letter code: uncharacterized protein (54 aa).

A signal peptide spans 1–23; it reads MKELIFFLLIIVILFVVFMVVSS.

This is an uncharacterized protein from Acheta domesticus (House cricket).